The primary structure comprises 162 residues: Transcription antitermination protein NusB (162 aa).

Belongs to the NusB family.

Its function is as follows. Involved in transcription antitermination. Required for transcription of ribosomal RNA (rRNA) genes. Binds specifically to the boxA antiterminator sequence of the ribosomal RNA (rrn) operons. The sequence is that of Transcription antitermination protein NusB from Mycobacterium sp. (strain JLS).